The chain runs to 95 residues: Aspartyl/glutamyl-tRNA(Asn/Gln) amidotransferase subunit C (95 aa).

It belongs to the GatC family. Heterotrimer of A, B and C subunits.

The catalysed reaction is L-glutamyl-tRNA(Gln) + L-glutamine + ATP + H2O = L-glutaminyl-tRNA(Gln) + L-glutamate + ADP + phosphate + H(+). It carries out the reaction L-aspartyl-tRNA(Asn) + L-glutamine + ATP + H2O = L-asparaginyl-tRNA(Asn) + L-glutamate + ADP + phosphate + 2 H(+). Its function is as follows. Allows the formation of correctly charged Asn-tRNA(Asn) or Gln-tRNA(Gln) through the transamidation of misacylated Asp-tRNA(Asn) or Glu-tRNA(Gln) in organisms which lack either or both of asparaginyl-tRNA or glutaminyl-tRNA synthetases. The reaction takes place in the presence of glutamine and ATP through an activated phospho-Asp-tRNA(Asn) or phospho-Glu-tRNA(Gln). The protein is Aspartyl/glutamyl-tRNA(Asn/Gln) amidotransferase subunit C of Ruthia magnifica subsp. Calyptogena magnifica.